We begin with the raw amino-acid sequence, 326 residues long: Immune-associated nucleotide-binding protein 4 (326 aa).

An AIG1-type G domain is found at 17 to 225; that stretch reads EPIKNIVLVG…FTDEMHRKIQ (209 aa). Residues 26–33 form a G1 region; sequence GRTGNGKS. Residues 26–34 and serine 47 each bind GTP; that span reads GRTGNGKSA. The interval 53–57 is G2; sequence GVTMK. Residues 75-78 form a G3 region; the sequence is DTPG. The segment at 145–148 is G4; it reads TGGD. The interval 184–186 is G5; that stretch reads DNR. Asparagine 185 is a binding site for GTP. The stretch at 217–241 forms a coiled coil; that stretch reads TDEMHRKIQKEAETLREQQKEVESK.

It belongs to the TRAFAC class TrmE-Era-EngA-EngB-Septin-like GTPase superfamily. AIG1/Toc34/Toc159-like paraseptin GTPase family. IAN subfamily. Expressed in radicles of the germinating seeds.

This chain is Immune-associated nucleotide-binding protein 4, found in Arabidopsis thaliana (Mouse-ear cress).